A 162-amino-acid chain; its full sequence is Protein-export protein SecB (162 aa).

This sequence belongs to the SecB family. Homotetramer, a dimer of dimers. One homotetramer interacts with 1 SecA dimer.

The protein localises to the cytoplasm. One of the proteins required for the normal export of preproteins out of the cell cytoplasm. It is a molecular chaperone that binds to a subset of precursor proteins, maintaining them in a translocation-competent state. It also specifically binds to its receptor SecA. This chain is Protein-export protein SecB, found in Legionella pneumophila (strain Paris).